A 227-amino-acid polypeptide reads, in one-letter code: Cytochrome c oxidase subunit 2 (227 aa).

At 1–14 (MAYPVQLGFQDAAS) the chain is on the mitochondrial intermembrane side. A helical transmembrane segment spans residues 15–45 (PIMEELLYFHDHTLMIMFLISSLVLYIISLM). The Mitochondrial matrix segment spans residues 46–59 (LTTELMHTNTMDAQ). The chain crosses the membrane as a helical span at residues 60 to 87 (EVETVWTILPAAILILIALPSLRILYMM). At 88-227 (DEITTPSLTL…HFEEWLLSML (140 aa)) the chain is on the mitochondrial intermembrane side. Positions 161, 196, 198, 200, 204, and 207 each coordinate Cu cation. Glutamate 198 provides a ligand contact to Mg(2+).

This sequence belongs to the cytochrome c oxidase subunit 2 family. As to quaternary structure, component of the cytochrome c oxidase (complex IV, CIV), a multisubunit enzyme composed of 14 subunits. The complex is composed of a catalytic core of 3 subunits MT-CO1, MT-CO2 and MT-CO3, encoded in the mitochondrial DNA, and 11 supernumerary subunits COX4I, COX5A, COX5B, COX6A, COX6B, COX6C, COX7A, COX7B, COX7C, COX8 and NDUFA4, which are encoded in the nuclear genome. The complex exists as a monomer or a dimer and forms supercomplexes (SCs) in the inner mitochondrial membrane with NADH-ubiquinone oxidoreductase (complex I, CI) and ubiquinol-cytochrome c oxidoreductase (cytochrome b-c1 complex, complex III, CIII), resulting in different assemblies (supercomplex SCI(1)III(2)IV(1) and megacomplex MCI(2)III(2)IV(2)). Found in a complex with TMEM177, COA6, COX18, COX20, SCO1 and SCO2. Interacts with TMEM177 in a COX20-dependent manner. Interacts with COX20. Interacts with COX16. The cofactor is Cu cation.

The protein localises to the mitochondrion inner membrane. It catalyses the reaction 4 Fe(II)-[cytochrome c] + O2 + 8 H(+)(in) = 4 Fe(III)-[cytochrome c] + 2 H2O + 4 H(+)(out). Component of the cytochrome c oxidase, the last enzyme in the mitochondrial electron transport chain which drives oxidative phosphorylation. The respiratory chain contains 3 multisubunit complexes succinate dehydrogenase (complex II, CII), ubiquinol-cytochrome c oxidoreductase (cytochrome b-c1 complex, complex III, CIII) and cytochrome c oxidase (complex IV, CIV), that cooperate to transfer electrons derived from NADH and succinate to molecular oxygen, creating an electrochemical gradient over the inner membrane that drives transmembrane transport and the ATP synthase. Cytochrome c oxidase is the component of the respiratory chain that catalyzes the reduction of oxygen to water. Electrons originating from reduced cytochrome c in the intermembrane space (IMS) are transferred via the dinuclear copper A center (CU(A)) of subunit 2 and heme A of subunit 1 to the active site in subunit 1, a binuclear center (BNC) formed by heme A3 and copper B (CU(B)). The BNC reduces molecular oxygen to 2 water molecules using 4 electrons from cytochrome c in the IMS and 4 protons from the mitochondrial matrix. This is Cytochrome c oxidase subunit 2 (MT-CO2) from Hapalemur griseus (Gray gentle lemur).